The sequence spans 309 residues: Formimidoylglutamase (309 aa).

Mn(2+) contacts are provided by H120, D145, H147, D149, D236, and D238.

It belongs to the arginase family. It depends on Mn(2+) as a cofactor.

It carries out the reaction N-formimidoyl-L-glutamate + H2O = formamide + L-glutamate. It participates in amino-acid degradation; L-histidine degradation into L-glutamate; L-glutamate from N-formimidoyl-L-glutamate (hydrolase route): step 1/1. Functionally, catalyzes the conversion of N-formimidoyl-L-glutamate to L-glutamate and formamide. The chain is Formimidoylglutamase from Chromobacterium violaceum (strain ATCC 12472 / DSM 30191 / JCM 1249 / CCUG 213 / NBRC 12614 / NCIMB 9131 / NCTC 9757 / MK).